The sequence spans 124 residues: Glycine cleavage system H protein (124 aa).

In terms of domain architecture, Lipoyl-binding spans 22–104 (TATVGITDFA…YGDGWMIEIE (83 aa)). Lysine 63 bears the N6-lipoyllysine mark.

This sequence belongs to the GcvH family. As to quaternary structure, the glycine cleavage system is composed of four proteins: P, T, L and H. Requires (R)-lipoate as cofactor.

The glycine cleavage system catalyzes the degradation of glycine. The H protein shuttles the methylamine group of glycine from the P protein to the T protein. This chain is Glycine cleavage system H protein, found in Salinibacter ruber (strain DSM 13855 / M31).